Reading from the N-terminus, the 107-residue chain is Thioredoxin-1 (107 aa).

The Thioredoxin domain occupies 2-106 (ASVRTMTDFH…LTNMMAKLVK (105 aa)). Residues Cys-31 and Cys-34 each act as nucleophile in the active site. A disulfide bridge connects residues Cys-31 and Cys-34.

The protein belongs to the thioredoxin family.

The protein localises to the nucleus. Participates in various redox reactions through the reversible oxidation of its active center dithiol to a disulfide and catalyzes dithiol-disulfide exchange reactions. As a reducing substrate of peroxiredoxin 1, thioredoxin 2 is preferred over thioredoxin 1. Required for female meiosis and early embryonic development. In Drosophila yakuba (Fruit fly), this protein is Thioredoxin-1 (dhd).